The primary structure comprises 437 residues: tRNA-queuosine alpha-mannosyltransferase (437 aa).

It belongs to the glycosyltransferase group 1 family. Glycosyltransferase 4 subfamily.

The protein localises to the cytoplasm. It is found in the nucleus. It carries out the reaction queuosine(34) in tRNA(Asp) + GDP-alpha-D-mannose = O-4''-alpha-D-mannosylqueuosine(34) in tRNA(Asp) + GDP + H(+). In terms of biological role, glycosyltransferase that specifically catalyzes mannosylation of cytoplasmic tRNA(Asp) modified with queuosine at position 34 (queuosine(34)). Mannosylates the cyclopentene moiety of queuosine(34) in tRNA(Asp) to form mannosyl-queuosine(34). Mannosylation of queuosine(34) in tRNA(Asp) is required to slow-down elongation at cognate codons, GAC and GAU, thereby regulating protein translation. The sequence is that of tRNA-queuosine alpha-mannosyltransferase (gtdc1) from Xenopus tropicalis (Western clawed frog).